The chain runs to 777 residues: Disintegrin and metalloproteinase domain-containing protein 5 (777 aa).

The signal sequence occupies residues methionine 1–alanine 16. A propeptide spanning residues glycine 17–tyrosine 142 is cleaved from the precursor. The Extracellular segment spans residues glycine 17–arginine 706. 2 N-linked (GlcNAc...) asparagine glycosylation sites follow: asparagine 49 and asparagine 123. Residues arginine 185–serine 382 enclose the Peptidase M12B domain. 4 disulfides stabilise this stretch: cysteine 294-cysteine 377, cysteine 336-cysteine 361, cysteine 338-cysteine 343, and cysteine 456-cysteine 477. The region spanning arginine 396 to asparagine 485 is the Disintegrin domain. N-linked (GlcNAc...) asparagine glycosylation is present at asparagine 566. The EGF-like domain occupies asparagine 633–alanine 667. 3 cysteine pairs are disulfide-bonded: cysteine 637–cysteine 649, cysteine 643–cysteine 655, and cysteine 657–cysteine 666. A helical membrane pass occupies residues phenylalanine 707 to lysine 727. Residues glutamine 728–glutamine 777 lie on the Cytoplasmic side of the membrane. A compositionally biased stretch (polar residues) spans serine 744–glutamate 760. A disordered region spans residues serine 744 to glutamine 777. A compositionally biased stretch (basic and acidic residues) spans phenylalanine 763–glutamine 777.

Interacts with TEX101. Post-translationally, subject to proteolytic processing during epididymal transit of spermatozoa. As to expression, detected in testis.

It is found in the membrane. Its function is as follows. This is a non catalytic metalloprotease-like protein. May play a role in sperm-egg fusion. In Cavia porcellus (Guinea pig), this protein is Disintegrin and metalloproteinase domain-containing protein 5 (ADAM5).